Reading from the N-terminus, the 617-residue chain is Glutamyl-tRNA(Gln) amidotransferase subunit B, mitochondrial (617 aa).

Residues 1–56 (MPRIPTSVLGKYLLSGQISRQGCVGARQITRHSALPSAAVSVANSARLLHVSSETV) constitute a mitochondrion transit peptide. The interval 53 to 90 (SETVPPPPAQPVPLRKQLKDEAKKAKKQGKKKSKGDSQ) is disordered. Residues 76–85 (KAKKQGKKKS) show a composition bias toward basic residues.

It belongs to the GatB/GatE family. GatB subfamily. As to quaternary structure, subunit of the heterotrimeric GatCAB amidotransferase (AdT) complex, composed of A, B and C subunits.

It is found in the mitochondrion. It carries out the reaction L-glutamyl-tRNA(Gln) + L-glutamine + ATP + H2O = L-glutaminyl-tRNA(Gln) + L-glutamate + ADP + phosphate + H(+). In terms of biological role, allows the formation of correctly charged Gln-tRNA(Gln) through the transamidation of misacylated Glu-tRNA(Gln) in the mitochondria. The reaction takes place in the presence of glutamine and ATP through an activated gamma-phospho-Glu-tRNA(Gln). The chain is Glutamyl-tRNA(Gln) amidotransferase subunit B, mitochondrial from Fusarium vanettenii (strain ATCC MYA-4622 / CBS 123669 / FGSC 9596 / NRRL 45880 / 77-13-4) (Fusarium solani subsp. pisi).